A 369-amino-acid polypeptide reads, in one-letter code: Uroporphyrinogen decarboxylase (369 aa).

Substrate is bound by residues 28-32 (RQAGR), Asp78, Tyr154, Ser209, and His339.

Belongs to the uroporphyrinogen decarboxylase family. Homodimer.

It localises to the cytoplasm. The enzyme catalyses uroporphyrinogen III + 4 H(+) = coproporphyrinogen III + 4 CO2. It functions in the pathway porphyrin-containing compound metabolism; protoporphyrin-IX biosynthesis; coproporphyrinogen-III from 5-aminolevulinate: step 4/4. Catalyzes the decarboxylation of four acetate groups of uroporphyrinogen-III to yield coproporphyrinogen-III. The chain is Uroporphyrinogen decarboxylase from Polaromonas naphthalenivorans (strain CJ2).